Reading from the N-terminus, the 130-residue chain is MPLSQEESTLIERATATINSIPISEDYSVASAALSSDGRIFTGVNVYHFTGGPCAELVVLGTAAAAAAGNLTCIVAIGNENRGILSPCGRCRQVLLDLHPGIKAVVKDSDGQPTAVGIRELLPSGYMNRA.

A CMP/dCMP-type deaminase domain is found at 1 to 129 (MPLSQEESTL…ELLPSGYMNR (129 aa)). Ser-28 is a substrate binding site. A Zn(2+)-binding site is contributed by Cys-54. The active-site Proton donor is the Glu-56. Arg-82 contributes to the substrate binding site. 2 residues coordinate Zn(2+): Cys-88 and Cys-91. Residue Tyr-126 participates in substrate binding.

This sequence belongs to the cytidine and deoxycytidylate deaminase family. Homotetramer. Zn(2+) is required as a cofactor.

It catalyses the reaction blasticidin S + H2O + H(+) = deaminohydroxyblasticidin S + NH4(+). Functionally, catalyzes the deamination of the cytosine moiety of the antibiotics blasticidin S, cytomycin and acetylblasticidin S. The sequence is that of Blasticidin-S deaminase (bsd) from Aspergillus terreus (strain NIH 2624 / FGSC A1156).